Reading from the N-terminus, the 346-residue chain is MTRARIAVDAMGGDFAPEEIVKGALRAQEELQADVILVGDPDRLRAICQDHAPHLQVRIEAAEEAIAMEDAAVSVRSRPRASINVAMDLVKAGEADAVISAGHSGAVMASALLRLGRIRGIDRPAIGALLPTVIPGKPVLVLDVGANVDCKPRFLEQFAVMGSIYSRDVLGQANPRVGLVNIGEEDSKGNELALASHQLLRNNPRICFVGNAEGRDVLSGQFDVVVCDGFVGNVLLKFAEAVGSVFLEIIRDELPRGMRGKVGSTLLRRNLRRIKQRLDHAEHGGALLLGVNGICIISHGSSKAPSIYSAIRLAVEAAENRVIDHLHQIQEPPSPAADLVTEPVVS.

Belongs to the PlsX family. As to quaternary structure, homodimer. Probably interacts with PlsY.

It localises to the cytoplasm. The catalysed reaction is a fatty acyl-[ACP] + phosphate = an acyl phosphate + holo-[ACP]. The protein operates within lipid metabolism; phospholipid metabolism. Catalyzes the reversible formation of acyl-phosphate (acyl-PO(4)) from acyl-[acyl-carrier-protein] (acyl-ACP). This enzyme utilizes acyl-ACP as fatty acyl donor, but not acyl-CoA. In Synechococcus elongatus (strain ATCC 33912 / PCC 7942 / FACHB-805) (Anacystis nidulans R2), this protein is Phosphate acyltransferase.